We begin with the raw amino-acid sequence, 729 residues long: ATP-dependent DNA helicase Hel308 (729 aa).

ATP contacts are provided by residues glutamine 28 and 46–53 (IPTASGKT). One can recognise a Helicase ATP-binding domain in the interval 33-199 (EKGLLEGRNL…WLEAELVVSE (167 aa)). Residues 144–147 (DEVH) carry the DEAH box motif. The region spanning 232-426 (AVNLALDTLK…SKLGTENALR (195 aa)) is the Helicase C-terminal domain. A disordered region spans residues 706-729 (SSGIIASEPPEKSPYSGQKTISDY). Polar residues predominate over residues 720–729 (YSGQKTISDY).

Belongs to the helicase family. Hel308 subfamily. Monomer.

The catalysed reaction is Couples ATP hydrolysis with the unwinding of duplex DNA by translocating in the 3'-5' direction.. It catalyses the reaction ATP + H2O = ADP + phosphate + H(+). In terms of biological role, DNA-dependent ATPase and 3'-5' DNA helicase that may be involved in repair of stalled replication forks. The polypeptide is ATP-dependent DNA helicase Hel308 (Methanosarcina barkeri (strain Fusaro / DSM 804)).